The primary structure comprises 316 residues: Cytochrome c biogenesis protein CcsA (316 aa).

7 helical membrane-spanning segments follow: residues Phe15–Leu35, Gly44–Gly64, Leu71–Leu91, Met142–Ile162, Val220–Asn240, Trp247–Leu267, and Ala281–Leu301.

The protein belongs to the CcmF/CycK/Ccl1/NrfE/CcsA family. May interact with Ccs1.

The protein resides in the plastid. It localises to the chloroplast thylakoid membrane. Its function is as follows. Required during biogenesis of c-type cytochromes (cytochrome c6 and cytochrome f) at the step of heme attachment. This chain is Cytochrome c biogenesis protein CcsA, found in Trachelium caeruleum (Blue throatwort).